The sequence spans 301 residues: Acetylglutamate kinase (301 aa).

Substrate-binding positions include 71–72 (GG), R93, and N198.

This sequence belongs to the acetylglutamate kinase family. ArgB subfamily.

The protein localises to the cytoplasm. It carries out the reaction N-acetyl-L-glutamate + ATP = N-acetyl-L-glutamyl 5-phosphate + ADP. The protein operates within amino-acid biosynthesis; L-arginine biosynthesis; N(2)-acetyl-L-ornithine from L-glutamate: step 2/4. Catalyzes the ATP-dependent phosphorylation of N-acetyl-L-glutamate. The sequence is that of Acetylglutamate kinase from Rhizorhabdus wittichii (strain DSM 6014 / CCUG 31198 / JCM 15750 / NBRC 105917 / EY 4224 / RW1) (Sphingomonas wittichii).